A 301-amino-acid polypeptide reads, in one-letter code: Sulfate adenylyltransferase subunit 2 (301 aa).

Positions 279–301 (RQGRLIDRDEAGSMEKKKREGYF) are disordered.

The protein belongs to the PAPS reductase family. CysD subfamily. Sulfate-activating enzymes, NodP and NodQ, may be physically associated.

It catalyses the reaction sulfate + ATP + H(+) = adenosine 5'-phosphosulfate + diphosphate. In terms of biological role, proposed to provide activated sulfate for transfer to nod factor. This Rhizobium sp. (strain N33) protein is Sulfate adenylyltransferase subunit 2 (nodP).